A 646-amino-acid polypeptide reads, in one-letter code: uncharacterized protein (646 aa).

The next 8 membrane-spanning stretches (helical) occupy residues 20 to 42, 55 to 77, 97 to 115, 127 to 149, 159 to 181, 188 to 206, 216 to 238, and 251 to 273; these read ILSR…LYLL, FLAG…IHQV, LLHF…HYML, YTFD…FSYW, IAFV…FFKL, ILLG…LLLA, YGAV…YHLF, and WVTM…IGTA.

The protein localises to the cell membrane. This is an uncharacterized protein from Bacillus subtilis (strain 168).